Reading from the N-terminus, the 316-residue chain is Ribose-phosphate pyrophosphokinase (316 aa).

Residues 40–42 and 99–100 contribute to the ATP site; these read DGE and RQ. Mg(2+) is bound by residues H133 and D174. K197 is an active-site residue. D-ribose 5-phosphate is bound by residues R199, D223, and 227–231; that span reads DTAGT.

Belongs to the ribose-phosphate pyrophosphokinase family. Class I subfamily. As to quaternary structure, homohexamer. Mg(2+) serves as cofactor.

The protein resides in the cytoplasm. It carries out the reaction D-ribose 5-phosphate + ATP = 5-phospho-alpha-D-ribose 1-diphosphate + AMP + H(+). It functions in the pathway metabolic intermediate biosynthesis; 5-phospho-alpha-D-ribose 1-diphosphate biosynthesis; 5-phospho-alpha-D-ribose 1-diphosphate from D-ribose 5-phosphate (route I): step 1/1. Functionally, involved in the biosynthesis of the central metabolite phospho-alpha-D-ribosyl-1-pyrophosphate (PRPP) via the transfer of pyrophosphoryl group from ATP to 1-hydroxyl of ribose-5-phosphate (Rib-5-P). The protein is Ribose-phosphate pyrophosphokinase of Fusobacterium nucleatum subsp. nucleatum (strain ATCC 25586 / DSM 15643 / BCRC 10681 / CIP 101130 / JCM 8532 / KCTC 2640 / LMG 13131 / VPI 4355).